We begin with the raw amino-acid sequence, 121 residues long: uncharacterized protein (121 aa).

Positions 101 to 121 (TVVKKEDVRESPVDTFMENAT) are disordered. Residues 102-112 (VVKKEDVRESP) are compositionally biased toward basic and acidic residues.

This is an uncharacterized protein from Schizosaccharomyces pombe (strain 972 / ATCC 24843) (Fission yeast).